The following is a 1846-amino-acid chain: Brefeldin A-inhibited guanine nucleotide-exchange protein 1 (1846 aa).

The DCB; DCB:DCB domain and DCB:HUS domain interaction stretch occupies residues 2 to 224 (YEGKKTKNMF…QEAKQMERER (223 aa)). A Phosphoserine modification is found at Ser-52. Disordered stretches follow at residues 217–248 (AKQM…HLRY), 264–302 (DLDP…DQAT), and 347–410 (VSAS…SPGA). Residues 267–277 (PQTHDVDKSLQ) show a composition bias toward basic and acidic residues. Phosphoserine is present on residues Ser-286, Ser-289, Ser-290, Ser-394, and Ser-407. Residues 391–406 (SVSSNDTQESGNSSGP) show a composition bias toward polar residues. An HUS; DCB:HUS domain interaction region spans residues 554–574 (ADAQSVVDIYVNYDCDLNAAN). A disordered region spans residues 631 to 684 (PNSQTTLGQEKPSEQEISEIKHPETINRYGSLNSLESTSSSGIGSYSTQMSGTD). Positions 641–655 (KPSEQEISEIKHPET) are enriched in basic and acidic residues. Residues 661–681 (SLNSLESTSSSGIGSYSTQMS) are compositionally biased toward low complexity. An SEC7 domain is found at 688–877 (QFEVLKQQKE…SAIYNEIAGK (190 aa)). The Nuclear localization signal (NLS) motif lies at 708–712 (KKPKR). Residues Ser-1076, Ser-1563, and Ser-1566 each carry the phosphoserine modification. Positions 1571 to 1600 (DSAQPRSSDNRQQAPLVSVSPASEEVSKGR) are disordered. The segment covering 1574 to 1585 (QPRSSDNRQQAP) has biased composition (polar residues).

In terms of assembly, homodimer. Interacts with ARFGEF2/BIG2; both proteins are probably part of the same or very similar macromolecular complexes. Interacts with FKBP2. Interacts with MYO9B. Interacts with PRKAR1A and PRKAR2A. Interacts with PPP1CC. Interacts with NCL, FBL, NUP62 and U3 small nucleolar RNA. Interacts with DPY30. Interacts with PDE3A. Interacts with KANK1. Interacts with TBC1D22A and TBC1D22B. Phosphorylated. In vitro phosphorylated by PKA reducing its GEF activity and dephosphorylated by phosphatase PP1.

Its subcellular location is the cytoplasm. It localises to the perinuclear region. It is found in the golgi apparatus. The protein resides in the trans-Golgi network. The protein localises to the nucleus. Its subcellular location is the nucleolus. It localises to the nucleus matrix. It is found in the membrane. Its activity is regulated as follows. Inhibited by brefeldin A. In terms of biological role, promotes guanine-nucleotide exchange on ARF1 and ARF3. Promotes the activation of ARF1/ARF3 through replacement of GDP with GTP. Involved in vesicular trafficking. Required for the maintenance of Golgi structure; the function may be independent of its GEF activity. Required for the maturation of integrin beta-1 in the Golgi. Involved in the establishment and persistence of cell polarity during directed cell movement in wound healing. Proposed to act as A kinase-anchoring protein (AKAP) and may mediate crosstalk between Arf and PKA pathways. Inhibits GAP activity of MYO9B probably through competitive RhoA binding. The function in the nucleus remains to be determined. This is Brefeldin A-inhibited guanine nucleotide-exchange protein 1 (Arfgef1) from Rattus norvegicus (Rat).